A 436-amino-acid chain; its full sequence is Anaerobic glycerol-3-phosphate dehydrogenase subunit B (436 aa).

The protein belongs to the anaerobic G-3-P dehydrogenase subunit B family. Composed of a catalytic GlpA/B dimer and of membrane bound GlpC. It depends on FMN as a cofactor.

It carries out the reaction a quinone + sn-glycerol 3-phosphate = dihydroxyacetone phosphate + a quinol. The protein operates within polyol metabolism; glycerol degradation via glycerol kinase pathway; glycerone phosphate from sn-glycerol 3-phosphate (anaerobic route): step 1/1. Its function is as follows. Conversion of glycerol 3-phosphate to dihydroxyacetone. Uses fumarate or nitrate as electron acceptor. In Vibrio cholerae serotype O1 (strain ATCC 39315 / El Tor Inaba N16961), this protein is Anaerobic glycerol-3-phosphate dehydrogenase subunit B.